A 201-amino-acid chain; its full sequence is Outer-membrane lipoprotein LolB (201 aa).

Positions 1 to 18 (MKWCRLSIILMSLILLAG) are cleaved as a signal peptide. Residue C19 is the site of N-palmitoyl cysteine attachment. Residue C19 is the site of S-diacylglycerol cysteine attachment.

This sequence belongs to the LolB family. As to quaternary structure, monomer.

The protein localises to the cell outer membrane. Its function is as follows. Plays a critical role in the incorporation of lipoproteins in the outer membrane after they are released by the LolA protein. This Nitrosococcus oceani (strain ATCC 19707 / BCRC 17464 / JCM 30415 / NCIMB 11848 / C-107) protein is Outer-membrane lipoprotein LolB.